We begin with the raw amino-acid sequence, 140 residues long: Regulator of ribonuclease activity B (140 aa).

Positions 115–140 (FEDPNAQDDDEDDGEAIDEDDNGIRH) are disordered. Positions 119–140 (NAQDDDEDDGEAIDEDDNGIRH) are enriched in acidic residues.

The protein belongs to the RraB family. Interacts with the C-terminal region of Rne.

It localises to the cytoplasm. In terms of biological role, globally modulates RNA abundance by binding to RNase E (Rne) and regulating its endonucleolytic activity. Can modulate Rne action in a substrate-dependent manner by altering the composition of the degradosome. The protein is Regulator of ribonuclease activity B of Pantoea ananatis (strain LMG 20103).